The sequence spans 249 residues: Demethylmenaquinone methyltransferase (249 aa).

Residues Thr67, Asp87, and 115–116 (DA) contribute to the S-adenosyl-L-methionine site.

It belongs to the class I-like SAM-binding methyltransferase superfamily. MenG/UbiE family.

It catalyses the reaction a 2-demethylmenaquinol + S-adenosyl-L-methionine = a menaquinol + S-adenosyl-L-homocysteine + H(+). Its pathway is quinol/quinone metabolism; menaquinone biosynthesis; menaquinol from 1,4-dihydroxy-2-naphthoate: step 2/2. Methyltransferase required for the conversion of demethylmenaquinol (DMKH2) to menaquinol (MKH2). In Leptospira interrogans serogroup Icterohaemorrhagiae serovar copenhageni (strain Fiocruz L1-130), this protein is Demethylmenaquinone methyltransferase.